Consider the following 268-residue polypeptide: Undecaprenyl-diphosphatase (268 aa).

A run of 8 helical transmembrane segments spans residues 8 to 28 (VILG…TGHL), 41 to 61 (AFWD…IVGL), 83 to 103 (FVIG…VAGK), 108 to 128 (VLFN…ILLW), 144 to 164 (FPLL…IPGV), 184 to 204 (AAEF…AYDF), 218 to 238 (IVAI…KTFL), and 246 to 266 (FVVF…ALAL).

Belongs to the UppP family.

Its subcellular location is the cell inner membrane. It carries out the reaction di-trans,octa-cis-undecaprenyl diphosphate + H2O = di-trans,octa-cis-undecaprenyl phosphate + phosphate + H(+). In terms of biological role, catalyzes the dephosphorylation of undecaprenyl diphosphate (UPP). Confers resistance to bacitracin. This Bradyrhizobium diazoefficiens (strain JCM 10833 / BCRC 13528 / IAM 13628 / NBRC 14792 / USDA 110) protein is Undecaprenyl-diphosphatase.